Here is a 553-residue protein sequence, read N- to C-terminus: Formate--tetrahydrofolate ligase (553 aa).

ATP is bound at residue 62–69 (TPAGEGKS).

Belongs to the formate--tetrahydrofolate ligase family.

The enzyme catalyses (6S)-5,6,7,8-tetrahydrofolate + formate + ATP = (6R)-10-formyltetrahydrofolate + ADP + phosphate. It participates in one-carbon metabolism; tetrahydrofolate interconversion. This chain is Formate--tetrahydrofolate ligase, found in Pediococcus pentosaceus (strain ATCC 25745 / CCUG 21536 / LMG 10740 / 183-1w).